The sequence spans 869 residues: Aconitate hydratase B (869 aa).

Substrate contacts are provided by residues arginine 191, 244–246, 417–419, and serine 501; these read SSR and QDT. [4Fe-4S] cluster-binding residues include cysteine 713, cysteine 772, and cysteine 775. Substrate contacts are provided by arginine 794 and arginine 799.

It belongs to the aconitase/IPM isomerase family. In terms of assembly, monomer. Requires [4Fe-4S] cluster as cofactor.

It carries out the reaction citrate = D-threo-isocitrate. The enzyme catalyses (2S,3R)-3-hydroxybutane-1,2,3-tricarboxylate = 2-methyl-cis-aconitate + H2O. It participates in carbohydrate metabolism; tricarboxylic acid cycle; isocitrate from oxaloacetate: step 2/2. It functions in the pathway organic acid metabolism; propanoate degradation. In terms of biological role, involved in the catabolism of short chain fatty acids (SCFA) via the tricarboxylic acid (TCA)(acetyl degradation route) and probably via the 2-methylcitrate cycle I (propionate degradation route). Catalyzes the reversible isomerization of citrate to isocitrate via cis-aconitate. Catalyzes the hydration of 2-methyl-cis-aconitate to yield (2R,3S)-2-methylisocitrate. The apo form of AcnB functions as a RNA-binding regulatory protein. The sequence is that of Aconitate hydratase B (acnB) from Pseudomonas aeruginosa (strain ATCC 15692 / DSM 22644 / CIP 104116 / JCM 14847 / LMG 12228 / 1C / PRS 101 / PAO1).